A 354-amino-acid chain; its full sequence is Uroporphyrinogen decarboxylase (354 aa).

Substrate contacts are provided by residues 27–31 (RQAGR), Asp-77, Tyr-154, Thr-209, and His-327.

It belongs to the uroporphyrinogen decarboxylase family. As to quaternary structure, homodimer.

The protein resides in the cytoplasm. The catalysed reaction is uroporphyrinogen III + 4 H(+) = coproporphyrinogen III + 4 CO2. Its pathway is porphyrin-containing compound metabolism; protoporphyrin-IX biosynthesis; coproporphyrinogen-III from 5-aminolevulinate: step 4/4. Its function is as follows. Catalyzes the decarboxylation of four acetate groups of uroporphyrinogen-III to yield coproporphyrinogen-III. The polypeptide is Uroporphyrinogen decarboxylase (Actinobacillus succinogenes (strain ATCC 55618 / DSM 22257 / CCUG 43843 / 130Z)).